The sequence spans 564 residues: Kelch repeat and BTB domain-containing protein A55 (564 aa).

The 68-residue stretch at 21-88 (CDISIVINDE…IYGIPLSLTN (68 aa)) folds into the BTB domain. Kelch repeat units follow at residues 252-297 (IELI…VLDN), 298-346 (IIYM…ADDE), 347-395 (YIYC…MLNG), 397-441 (IYVM…VHDG), 442-492 (KIYI…SAHN), and 494-539 (LYVG…CEPI).

The protein belongs to the poxviruses A55 protein family. In terms of assembly, interacts (via BTB domain) with host CUL3.

It is found in the host cytoplasm. Functionally, probable substrate-specific adapter of CUL3-containing E3 ubiquitin-protein ligases which mediate the ubiquitination and subsequent proteasomal degradation of host target proteins. This Bos taurus (Bovine) protein is Kelch repeat and BTB domain-containing protein A55 (KBTB1).